The sequence spans 272 residues: 1,4-dihydroxy-2-naphthoyl-CoA synthase (272 aa).

Substrate contacts are provided by residues R33, 72 to 76 (SGGDQ), Y84, 116 to 120 (YAIGG), T142, S148, Y245, and K260. 141–143 (QTG) lines the hydrogencarbonate pocket.

It belongs to the enoyl-CoA hydratase/isomerase family. MenB subfamily. Requires hydrogencarbonate as cofactor.

It carries out the reaction 2-succinylbenzoyl-CoA + H(+) = 1,4-dihydroxy-2-naphthoyl-CoA + H2O. It functions in the pathway quinol/quinone metabolism; 1,4-dihydroxy-2-naphthoate biosynthesis; 1,4-dihydroxy-2-naphthoate from chorismate: step 6/7. The protein operates within quinol/quinone metabolism; menaquinone biosynthesis. Converts o-succinylbenzoyl-CoA (OSB-CoA) to 1,4-dihydroxy-2-naphthoyl-CoA (DHNA-CoA). The polypeptide is 1,4-dihydroxy-2-naphthoyl-CoA synthase (Staphylococcus epidermidis (strain ATCC 12228 / FDA PCI 1200)).